Here is a 500-residue protein sequence, read N- to C-terminus: MASSSSILELNETEKELSDIFLNVSKKIGQMDRKEPEVRFAGGWVRDKLLRIESHDIDVAIDCMSGFEFAQHLQSYLAQQHPDWETKVIKIDANPLKSKHLETATARIMGMDIDIVNLRHHDYTNSNSSNKLVFGTPLEDALRRDATINALFYNLKSKTVEDFTGKGLVDLSNKIIRTPLVADETFGDDPLRAVRCIRFATKYDFNIHEETIKGLKNPELHERLRSSISRERIGVEVDKMLKHCNTNRALKIIHSLGMFACIFGPLEIHTKKLQSKNIESLSLIPYAIDLFGYLQKKDVSIKNLSSSSKYIFWLAIATLPWYNWSILEKSKIKILPPILIRDSLKYSKPIMSQVENFFVHYPLIMSKINVLEKEGKLTRLGCGRLVRELGPHWRDIIDWAFFMNTLISNSDIQRLNKDEEVTWFHVLVKHIEEYGMEEAYNIQPIINGNEITRILGIRPGPHLRKMLDDSIEWRIQNPESTKEDYIAIMLEKGTSAVVDS.

The interval Asp-122–Glu-139 is flexible loop. The short motif at Glu-231–Leu-241 is the ERhxxExxxhh motif element.

This sequence belongs to the tRNA nucleotidyltransferase/poly(A) polymerase family.

It carries out the reaction a tRNA precursor + 2 CTP = a tRNA with a 3' CC end + 2 diphosphate. TRNA nucleotidyltransferase involved in the synthesis of the tRNA CCA terminus. In contrast to what is usually observed in eukaryotes for which one enzyme synthesizes the whole tRNA CCA terminus, in S.pombe, cca1 specifically adds two cytidine residues to a tRNA substrate lacking this sequence while cca2 specifically adds the terminal adenosine residue thereby completing the CCA sequence. The chain is tRNA nucleotidyltransferase cca1 from Schizosaccharomyces pombe (strain 972 / ATCC 24843) (Fission yeast).